The sequence spans 173 residues: uncharacterized protein (173 aa).

A disordered region spans residues 49–72 (PTRSGRTSNSGNRGPVMTSTSSIN).

This is an uncharacterized protein from Human adenovirus B serotype 7 (HAdV-7).